An 830-amino-acid chain; its full sequence is BLOC-2 complex member HPS5 homolog (830 aa).

WD repeat units lie at residues 25-64 (RNNS…FLAI), 67-106 (SQLG…STDG), and 114-153 (GGPA…GRNI). Positions 578 to 604 (DTETIVRLLRKLETLMEENEEPNARLK) form a coiled coil.

Belongs to the HPS5 family.

Its function is as follows. Has a role in the biogenesis of eye pigment granules. Eye pigment granules are specialized forms of late endosomes or lysosomes. Biogenesis of pigment granules in the eye requires molecular components required for protein delivery to lysosomes. This Anopheles gambiae (African malaria mosquito) protein is BLOC-2 complex member HPS5 homolog.